Here is a 450-residue protein sequence, read N- to C-terminus: Keratin, type I cytoskeletal 25 (450 aa).

The tract at residues 1–24 (MSLRLPSGSRRAGPRPTTGSLRLS) is disordered. Residues 1 to 78 (MSLRLPSGSR…MNEGGLLSGN (78 aa)) are head. The tract at residues 79–114 (EKVTMQNLNDRLASYLENVRALEEANADLEQKIKGW) is coil 1A. One can recognise an IF rod domain in the interval 79 to 394 (EKVTMQNLND…LLIGGDDGAC (316 aa)). Positions 115 to 136 (YEKFGPGSCRGLDHDYSRYLPI) are linker 1. Residues 137-228 (IEDLKNQIIA…KNHKEEMQVL (92 aa)) are coil 1B. Residues 229-251 (QCAAGGNVNVEMNAAPGVDLTVL) are linker 12. The coil 2 stretch occupies residues 252–390 (LNNMRAEYEA…ETYCLLIGGD (139 aa)). The interval 391–450 (DGACKSGGYKSKDYAAGNMGNQMKDPIRAIVVKKVLEEVDQRSKVLTTRLHSLEEKSQSN) is tail. Position 442 is a phosphoserine (S442).

It belongs to the intermediate filament family. As to quaternary structure, heterodimer of a type I and a type II keratin. Heterodimer with type II keratin KRT5 leading to the formation of keratin intermediate filament (KIF) network. Interacts with KRT6A to form filaments. Expressed in skin and wool follicle. Expression localized to the inner root sheath of wool follicle.

The protein resides in the cytoplasm. Functionally, essential for the proper assembly of type I and type II keratin protein complexes and formation of keratin intermediate filaments in the inner root sheath (irs). Plays a role in the cytoskeleton organization. The polypeptide is Keratin, type I cytoskeletal 25 (Ovis aries (Sheep)).